The chain runs to 347 residues: Virulence plasmid protein pGP2-D (347 aa).

The polypeptide is Virulence plasmid protein pGP2-D (Chlamydia psittaci (Chlamydophila psittaci)).